Here is a 59-residue protein sequence, read N- to C-terminus: MAKTIKITQTRSLIGRLPKHKATMAGLGLRRIGHTVEREDTPAVRGMINLVSYMVKVEE.

The protein belongs to the universal ribosomal protein uL30 family. Part of the 50S ribosomal subunit.

The sequence is that of Large ribosomal subunit protein uL30 from Proteus mirabilis (strain HI4320).